Reading from the N-terminus, the 121-residue chain is Large ribosomal subunit protein eL31 (121 aa).

This sequence belongs to the eukaryotic ribosomal protein eL31 family.

The polypeptide is Large ribosomal subunit protein eL31 (RPL31) (Perilla frutescens (Beefsteak mint)).